The following is a 325-amino-acid chain: Germination protease (325 aa).

The propeptide occupies 1-7 (MYNVRTD).

Belongs to the peptidase A25 family. Homotetramer. In terms of processing, autoproteolytically processed. The inactive tetrameric zymogen termed p46 autoprocesses to a smaller form termed p41, which is active only during spore germination.

The catalysed reaction is Endopeptidase action with P4 Glu or Asp, P1 preferably Glu &gt; Asp, P1' hydrophobic and P2' Ala.. Initiates the rapid degradation of small, acid-soluble proteins during spore germination. The protein is Germination protease of Clostridium perfringens (strain 13 / Type A).